Consider the following 135-residue polypeptide: FK506-binding protein 2 (135 aa).

The N-terminal stretch at 1 to 20 (MRVPIITTLLTLALTGLSQA) is a signal peptide. A PPIase FKBP-type domain is found at 40–128 (GDTVKMHYRG…IFQTELLEIE (89 aa)). Positions 132-135 (KDEL) match the Prevents secretion from ER motif.

This sequence belongs to the FKBP-type PPIase family. FKBP2 subfamily.

It localises to the endoplasmic reticulum. It catalyses the reaction [protein]-peptidylproline (omega=180) = [protein]-peptidylproline (omega=0). With respect to regulation, inhibited by both FK506 and rapamycin. Its function is as follows. PPIases accelerate the folding of proteins. It catalyzes the cis-trans isomerization of proline imidic peptide bonds in oligopeptides. This is FK506-binding protein 2 (fkbB) from Emericella nidulans (strain FGSC A4 / ATCC 38163 / CBS 112.46 / NRRL 194 / M139) (Aspergillus nidulans).